The primary structure comprises 414 residues: MDNELDNLISLLQKSKASLKEKHGDRIRSIFAAHHSGSILPKEDKSLYDKCLATVDLLDEVQQMLTPPLHTLIDGFFGFINSKTLLCAVEFGIPDALSQGPKSIEQLASSSPQGELSPHRLTQVLRTLTGIGIFNYDKTSKLYSNNATSDLITTAHWSKWVYWTKFYPTEFYDMMRFLPDHIKANASRTAAQSNYNTDMEFYEYLSNSGLAKEFHRVLGAGATAQLPGMISDFPWDTLGDETVLDLGTGSGEFLFQLLENYPRMRGAFMDIPSTISRIQAECEQPGGRFSGVRDRVAGFHAGNFLDEVPASVVYTIKWCLHNWSDEDTIKILQNIRRAIVVKPEARLLIIESVLEDGRTGRPARYGDIIMMATCNGKERDIENWQAVCEQSGWEVVKSWALRNSIPSCLELRPI.

An S-adenosyl-L-methionine-binding site is contributed by Asp-270. His-321 serves as the catalytic Proton acceptor.

The protein belongs to the class I-like SAM-binding methyltransferase superfamily. Cation-independent O-methyltransferase family. COMT subfamily.

The protein operates within mycotoxin biosynthesis. Functionally, O-methyltransferase; part of the gene cluster that mediates the biosynthesis of sirodesmin PL, an epipolythiodioxopiperazine (ETP) characterized by a disulfide bridged cyclic dipeptide and that acts as a phytotoxin which is involved in the blackleg didease of canola. SirD catalyzes the O-prenylation of L-tyrosine (L-Tyr) in the presence of dimethylallyl diphosphate (DMAPP) to yield 4-O-dimethylallyl-L-Tyr, and therefore represents probably the first pathway-specific enzyme in the biosynthesis of sirodesmin PL. 4-O-dimethylallyl-L-Tyr, then undergoes condensation with L-Ser in a reaction catalyzed by the non-ribosomal peptide synthase sirP to form the diketopiperazine (DKP) backbone. Further bishydroxylation of the DKP performed by the cytochrome P450 monooxygenase sirC leads to the production of the intermediate phomamide. This step is essential to form the reactive thiol group required for toxicity of sirodesmin PL. The next steps of sirodesmin biosynthesis are not well understood yet, but some predictions could be made from intermediate compounds identification. Phomamide is converted into phomalizarine via oxidation, probably by sirT. Further oxidation, methylation (by sirM or sirN) and reduction steps convert phomalizarine to deacetyl sirodesmin. Finally, acetyltransferase sirH probably acetylates deacetyl sirodesmin to produce sirodesmin PL. The protein is O-methyltransferase sirM of Leptosphaeria maculans (Blackleg fungus).